A 326-amino-acid polypeptide reads, in one-letter code: tRNA-dihydrouridine(16) synthase (326 aa).

FMN-binding positions include 8–10 and Gln69; that span reads PME. The active-site Proton donor is Cys99. FMN is bound by residues Lys140, 200 to 202, and 224 to 225; these read NGE and GR.

The protein belongs to the Dus family. DusC subfamily. The cofactor is FMN.

The enzyme catalyses 5,6-dihydrouridine(16) in tRNA + NADP(+) = uridine(16) in tRNA + NADPH + H(+). The catalysed reaction is 5,6-dihydrouridine(16) in tRNA + NAD(+) = uridine(16) in tRNA + NADH + H(+). In terms of biological role, catalyzes the synthesis of 5,6-dihydrouridine (D), a modified base found in the D-loop of most tRNAs, via the reduction of the C5-C6 double bond in target uridines. Specifically modifies U16 in tRNAs. The chain is tRNA-dihydrouridine(16) synthase from Ralstonia nicotianae (strain ATCC BAA-1114 / GMI1000) (Ralstonia solanacearum).